Reading from the N-terminus, the 207-residue chain is Large ribosomal subunit protein uL4 (207 aa).

The segment at Leu44–Ile78 is disordered. The segment covering Gly60–Gly71 has biased composition (basic residues).

This sequence belongs to the universal ribosomal protein uL4 family. In terms of assembly, part of the 50S ribosomal subunit.

One of the primary rRNA binding proteins, this protein initially binds near the 5'-end of the 23S rRNA. It is important during the early stages of 50S assembly. It makes multiple contacts with different domains of the 23S rRNA in the assembled 50S subunit and ribosome. In terms of biological role, forms part of the polypeptide exit tunnel. The chain is Large ribosomal subunit protein uL4 from Halalkalibacterium halodurans (strain ATCC BAA-125 / DSM 18197 / FERM 7344 / JCM 9153 / C-125) (Bacillus halodurans).